The sequence spans 709 residues: Polyribonucleotide nucleotidyltransferase (709 aa).

Mg(2+)-binding residues include D485 and D491. One can recognise a KH domain in the interval 552–611; the sequence is PRIYTMKIDPKKIKDVIGKGGATIRSLTEETGTSIDIDDDGTVKIAAVDSNAAKNVMGRI. An S1 motif domain is found at 621-689; it reads GAIYKGKVTR…RQGRIRLTMK (69 aa).

This sequence belongs to the polyribonucleotide nucleotidyltransferase family. Component of the RNA degradosome, which is a multiprotein complex involved in RNA processing and mRNA degradation. Mg(2+) is required as a cofactor.

It localises to the cytoplasm. The enzyme catalyses RNA(n+1) + phosphate = RNA(n) + a ribonucleoside 5'-diphosphate. Functionally, involved in mRNA degradation. Catalyzes the phosphorolysis of single-stranded polyribonucleotides processively in the 3'- to 5'-direction. The polypeptide is Polyribonucleotide nucleotidyltransferase (Haemophilus influenzae (strain PittGG)).